Consider the following 937-residue polypeptide: Ubiquitin carboxyl-terminal hydrolase 37 (937 aa).

Positions 38 to 40 (RDN) match the KEN box 1 motif. Short sequence motifs (D-box) lie at residues 76-84 (RMTLTLKDS) and 101-110 (KEYLETVKLG). A compositionally biased stretch (polar residues) spans 132-149 (TAQNDSGLSPSDKQSAPR). Disordered stretches follow at residues 132–216 (TAQN…KAIT) and 232–258 (QSEE…SRTG). Basic and acidic residues predominate over residues 151–161 (SSLDSREDSTP). Positions 162 to 170 (RKPLGSPSR) match the D-box 3 motif. A KEN box 2 motif is present at residues 204-206 (KEN). Positions 322–911 (QGFSNLGNTC…SGYIFFYMHK (590 aa)) constitute a USP domain. Residue Cys331 is the Nucleophile of the active site. Positions 609–625 (NSSTLRRASQRPESSGS) are enriched in polar residues. Disordered stretches follow at residues 609–632 (NSST…DSDS) and 688–710 (TSLC…GDAD). The UIM 1 domain occupies 672-691 (NDEEMLAAVLEMSRHDTSLC). The KEN box 3 motif lies at 742 to 744 (KEN). 2 consecutive UIM domains span residues 766–785 (REEQ…QEAR) and 788–807 (REDD…FNNS). His866 serves as the catalytic Proton acceptor.

The protein belongs to the peptidase C19 family.

It catalyses the reaction Thiol-dependent hydrolysis of ester, thioester, amide, peptide and isopeptide bonds formed by the C-terminal Gly of ubiquitin (a 76-residue protein attached to proteins as an intracellular targeting signal).. Its function is as follows. Deubiquitinase that antagonizes the anaphase-promoting complex (APC/C) during G1/S transition by mediating deubiquitination of APC/C target proteins, thereby promoting S phase entry. Specifically mediates deubiquitination of 'Lys-11'-linked polyubiquitin chains, a specific ubiquitin-linkage type mediated by the APC/C complex. The protein is Ubiquitin carboxyl-terminal hydrolase 37 (usp37) of Danio rerio (Zebrafish).